The following is a 1377-amino-acid chain: DNA-directed RNA polymerase subunit beta' (1377 aa).

4 residues coordinate Zn(2+): cysteine 60, cysteine 62, cysteine 75, and cysteine 78. Mg(2+)-binding residues include aspartate 449, aspartate 451, and aspartate 453. Zn(2+) contacts are provided by cysteine 777, cysteine 851, cysteine 858, and cysteine 861.

The protein belongs to the RNA polymerase beta' chain family. In terms of assembly, the RNAP catalytic core consists of 2 alpha, 1 beta, 1 beta' and 1 omega subunit. When a sigma factor is associated with the core the holoenzyme is formed, which can initiate transcription. It depends on Mg(2+) as a cofactor. The cofactor is Zn(2+).

The catalysed reaction is RNA(n) + a ribonucleoside 5'-triphosphate = RNA(n+1) + diphosphate. Its function is as follows. DNA-dependent RNA polymerase catalyzes the transcription of DNA into RNA using the four ribonucleoside triphosphates as substrates. In Borrelia turicatae (strain 91E135), this protein is DNA-directed RNA polymerase subunit beta'.